A 356-amino-acid polypeptide reads, in one-letter code: Putative methylthioribose-1-phosphate isomerase (356 aa).

Substrate-binding positions include 57–59 (RGA), R100, and Q206. The active-site Proton donor is the D247. Residue 257–258 (NK) participates in substrate binding.

This sequence belongs to the eIF-2B alpha/beta/delta subunits family. MtnA subfamily.

The catalysed reaction is 5-(methylsulfanyl)-alpha-D-ribose 1-phosphate = 5-(methylsulfanyl)-D-ribulose 1-phosphate. Catalyzes the interconversion of methylthioribose-1-phosphate (MTR-1-P) into methylthioribulose-1-phosphate (MTRu-1-P). This chain is Putative methylthioribose-1-phosphate isomerase, found in Pyrococcus furiosus (strain ATCC 43587 / DSM 3638 / JCM 8422 / Vc1).